The sequence spans 177 residues: Protein SOB FIVE-LIKE 6 (177 aa).

The short motif at 14-19 (SGWTMY) is the SOFL-A element. Disordered stretches follow at residues 37–60 (ETKQ…PYYC) and 78–104 (KSKS…FNSS). Residues 47–56 (SMVSDASSGP) carry the SOFL-B motif. Residues 79 to 90 (SKSKNKNKNKKK) show a composition bias toward basic residues.

This sequence belongs to the SOFL plant protein family. In terms of tissue distribution, expressed in seedlings, flowers and siliques. Barely detectable in roots and leaves.

It localises to the cytoplasm. The protein resides in the nucleus. In terms of biological role, involved in cytokinin-mediated development. The sequence is that of Protein SOB FIVE-LIKE 6 from Arabidopsis thaliana (Mouse-ear cress).